The primary structure comprises 221 residues: 2,3-bisphosphoglycerate-dependent phosphoglycerate mutase (221 aa).

Residues 8 to 15, 21 to 22, R60, 87 to 90, K98, 114 to 115, and 174 to 175 contribute to the substrate site; these read RHGNSLWN, TG, ERHY, RR, and GN. H9 functions as the Tele-phosphohistidine intermediate in the catalytic mechanism. E87 (proton donor/acceptor) is an active-site residue. The segment at 114-140 is disordered; the sequence is RRGYDTPPPPLHSQADDPRYEEPPPLS.

Belongs to the phosphoglycerate mutase family. BPG-dependent PGAM subfamily.

It catalyses the reaction (2R)-2-phosphoglycerate = (2R)-3-phosphoglycerate. It functions in the pathway carbohydrate degradation; glycolysis; pyruvate from D-glyceraldehyde 3-phosphate: step 3/5. Functionally, catalyzes the interconversion of 2-phosphoglycerate and 3-phosphoglycerate. This Tropheryma whipplei (strain TW08/27) (Whipple's bacillus) protein is 2,3-bisphosphoglycerate-dependent phosphoglycerate mutase.